The sequence spans 340 residues: Ferredoxin--NADP reductase (340 aa).

Residues aspartate 33, glutamine 41, tyrosine 46, alanine 86, phenylalanine 120, aspartate 286, and threonine 327 each contribute to the FAD site.

Belongs to the ferredoxin--NADP reductase type 2 family. In terms of assembly, homodimer. FAD is required as a cofactor.

The catalysed reaction is 2 reduced [2Fe-2S]-[ferredoxin] + NADP(+) + H(+) = 2 oxidized [2Fe-2S]-[ferredoxin] + NADPH. The protein is Ferredoxin--NADP reductase of Rickettsia rickettsii (strain Iowa).